Consider the following 762-residue polypeptide: Polymeric immunoglobulin receptor (762 aa).

Residues 1-18 form the signal peptide; the sequence is MTLFFLTCLLAVFPVVSM. In terms of domain architecture, Ig-like V-type 1; required for binding to polymeric IgA and IgM spans 19–120; the sequence is KSPIFGPPEI…GVGINNRGLS (102 aa). At 19 to 636 the chain is on the extracellular side; the sequence is KSPIFGPPEI…SSAGQGGSSK (618 aa). Intrachain disulfides connect Cys-40–Cys-110 and Cys-56–Cys-64. Asn-83 and Asn-135 each carry an N-linked (GlcNAc...) asparagine glycan. 4 consecutive Ig-like V-type domains span residues 145 to 238, 251 to 351, 363 to 460, and 464 to 563; these read GGKV…DLHV, GSSV…ETTF, GGSV…LKIV, and PNLK…VYVA. 8 disulfide bridges follow: Cys-152-Cys-221, Cys-258-Cys-324, Cys-272-Cys-280, Cys-370-Cys-443, Cys-384-Cys-394, Cys-484-Cys-546, Cys-488-Cys-522, and Cys-498-Cys-505. N-linked (GlcNAc...) asparagine glycosylation is present at Asn-291. Asn-423 carries an N-linked (GlcNAc...) asparagine glycan. N-linked (GlcNAc...) asparagine glycosylation occurs at Asn-530. Residues 604–634 form a disordered region; that stretch reads FVDTQAKDPEDAAGGSIASADPGSSAGQGGS. The chain crosses the membrane as a helical span at residues 637–659; the sequence is VVVSTLVPLALVLALGVLVVGVL. The Cytoplasmic portion of the chain corresponds to 660–762; it reads RARHRKNVDR…ANIQDGPSKA (103 aa).

Interacts (mainly via CDR1-like domain) with dimeric IgA. Interacts (mainly via CDR2-like domain) with pentameric IgM. As to quaternary structure, either free or part of the secretory IgA (sIgA) complex that consists of two, four or five IgA monomers, and two additional non-Ig polypeptides, namely the JCHAIN and the secretory component (the proteolytic product of PIGR). Free secretory component interacts with bacterial antigens toxA of C.difficile and eae of E.coli. In terms of processing, N-glycosylated. Carries predominantly biantennary complex type glycans which are largely non-fucosylated. Sialylation with NeuAc is common, except for Asn-291 which carries exclusively high mannose glycans. N-glycans attached to Asn-83: Gal2GlcNAc2Man3GlcNAc2; Gal2GlcNAc2Man3GlcNAc2(Fuc); Gal1GlcNAc1Man4GlcNAc2(Fuc); Gal1GlcNAc1Man3GlcNAc2; Gal1GlcNAc1Man4GlcNAc2 and NeuAc1Gal2GlcNAc2Man3GlcNAc2. N-glycans attached to Asn-135: Gal2GlcNAc2Man3GlcNAc2; Gal1GlcNAc1Man3GlcNAc2 and NeuAc1Gal2GlcNAc2Man3GlcNAc2. N-glycans attached to Asn-291: Man5-8GlcNAc2. N-glycans attached to Asn-423: NeuAc1Gal2GlcNAc2Man3GlcNAc2. N-glycans attached to Asn-530: Gal2GlcNAc2Man3GlcNAc2; Gal1GlcNAc1Man3GlcNAc2 and NeuAc1Gal2GlcNAc2Man3GlcNAc2. N-glycosylation is required for anchoring IgA molecules to mucus but is not necessary for Ig binding.

The protein resides in the cell membrane. It is found in the secreted. Functionally, mediates selective transcytosis of polymeric IgA and IgM across mucosal epithelial cells. Binds polymeric IgA and IgM at the basolateral surface of epithelial cells. The complex is then transported across the cell to be secreted at the apical surface. During this process, a cleavage occurs that separates the extracellular (known as the secretory component) from the transmembrane segment. Its function is as follows. Through its N-linked glycans ensures anchoring of secretory IgA (sIgA) molecules to mucus lining the epithelial surface to neutralize extracellular pathogens. On its own (free form) may act as a non-specific microbial scavenger to prevent pathogen interaction with epithelial cells. The protein is Polymeric immunoglobulin receptor (PIGR) of Equus asinus (Donkey).